A 112-amino-acid chain; its full sequence is Peptidyl-tRNA hydrolase (112 aa).

The disordered stretch occupies residues 64 to 99; it reads EEAKRAGLPTGLISDAGRTQLEPGTPTALAIGPAPD.

Belongs to the PTH2 family.

Its subcellular location is the cytoplasm. It catalyses the reaction an N-acyl-L-alpha-aminoacyl-tRNA + H2O = an N-acyl-L-amino acid + a tRNA + H(+). Functionally, the natural substrate for this enzyme may be peptidyl-tRNAs which drop off the ribosome during protein synthesis. The polypeptide is Peptidyl-tRNA hydrolase (Halobacterium salinarum (strain ATCC 29341 / DSM 671 / R1)).